Reading from the N-terminus, the 255-residue chain is 7alpha-hydroxysteroid dehydrogenase (255 aa).

Residues isoleucine 23, 42–43 (DI), 68–69 (DI), and asparagine 95 each bind NAD(+). Residues glycine 99, serine 146, asparagine 151, and tyrosine 159 each contribute to the glycochenodeoxycholate site. NAD(+) contacts are provided by residues tyrosine 159, lysine 163, and 192–194 (ILT). Residue tyrosine 159 is the Proton acceptor of the active site.

It belongs to the short-chain dehydrogenases/reductases (SDR) family. In terms of assembly, homotetramer.

The catalysed reaction is cholate + NAD(+) = 3alpha,12alpha-dihydroxy-7-oxo-5beta-cholanate + NADH + H(+). The enzyme catalyses chenodeoxycholate + NAD(+) = 7-oxolithocholate + NADH + H(+). It catalyses the reaction taurochenodeoxycholate + NAD(+) = 7-oxotaurolithocholate + NADH + H(+). It carries out the reaction taurocholate + NAD(+) = 7-oxo-taurodeoxycholate + NADH + H(+). The catalysed reaction is glycocholate + NAD(+) = 7-oxo-glycodeoxycholate + NADH + H(+). The enzyme catalyses glycochenodeoxycholate + NAD(+) = 7-oxoglycolithocholate + NADH + H(+). Functionally, 7alpha-hydroxysteroid dehydrogenase involved in the metabolism of bile acids. Catalyzes the NAD(+)-dependent oxidation of the 7alpha-hydroxy group of 7alpha-hydroxysteroids, such as the major human bile acids cholate and chenodeoxycholate, to the corresponding 7-oxosteroids. To a lesser extent, can also act on taurochenodeoxycholate, taurocholate and glycocholate. Can also use glycochenodeoxycholate as substrate. Is not able to use NADP(+) instead of NAD(+) as the electron acceptor. The chain is 7alpha-hydroxysteroid dehydrogenase (hdhA) from Escherichia coli O157:H7.